The sequence spans 94 residues: Large ribosomal subunit protein bL25 (94 aa).

The protein belongs to the bacterial ribosomal protein bL25 family. As to quaternary structure, part of the 50S ribosomal subunit; part of the 5S rRNA/L5/L18/L25 subcomplex. Contacts the 5S rRNA. Binds to the 5S rRNA independently of L5 and L18.

In terms of biological role, this is one of the proteins that binds to the 5S RNA in the ribosome where it forms part of the central protuberance. This Citrobacter koseri (strain ATCC BAA-895 / CDC 4225-83 / SGSC4696) protein is Large ribosomal subunit protein bL25.